The sequence spans 187 residues: Protein GrpE (187 aa).

The segment at 1 to 25 (MADEQNLDNRAPEETPAAEGTSAGE) is disordered.

The protein belongs to the GrpE family. In terms of assembly, homodimer.

It localises to the cytoplasm. In terms of biological role, participates actively in the response to hyperosmotic and heat shock by preventing the aggregation of stress-denatured proteins, in association with DnaK and GrpE. It is the nucleotide exchange factor for DnaK and may function as a thermosensor. Unfolded proteins bind initially to DnaJ; upon interaction with the DnaJ-bound protein, DnaK hydrolyzes its bound ATP, resulting in the formation of a stable complex. GrpE releases ADP from DnaK; ATP binding to DnaK triggers the release of the substrate protein, thus completing the reaction cycle. Several rounds of ATP-dependent interactions between DnaJ, DnaK and GrpE are required for fully efficient folding. In Azotobacter vinelandii (strain DJ / ATCC BAA-1303), this protein is Protein GrpE.